Here is a 295-residue protein sequence, read N- to C-terminus: ATP synthase subunit a (295 aa).

7 helical membrane passes run 41-61 (KWSA…WLGF), 101-121 (YLTI…IPVA), 129-149 (IALP…VGIR), 161-181 (LVPA…IEFV), 191-211 (LAIR…VFAL), 222-242 (FVFG…ELMI), and 244-264 (VLQA…AISS).

It belongs to the ATPase A chain family. F-type ATPases have 2 components, CF(1) - the catalytic core - and CF(0) - the membrane proton channel. CF(1) has five subunits: alpha(3), beta(3), gamma(1), delta(1), epsilon(1). CF(0) has three main subunits: a(1), b(2) and c(9-12). The alpha and beta chains form an alternating ring which encloses part of the gamma chain. CF(1) is attached to CF(0) by a central stalk formed by the gamma and epsilon chains, while a peripheral stalk is formed by the delta and b chains.

It is found in the cell membrane. In terms of biological role, key component of the proton channel; it plays a direct role in the translocation of protons across the membrane. This is ATP synthase subunit a from Parafrankia sp. (strain EAN1pec).